Reading from the N-terminus, the 366-residue chain is tRNA/tmRNA (uracil-C(5))-methyltransferase (366 aa).

Gln-190, Tyr-218, Asn-223, Glu-239, and Asp-299 together coordinate S-adenosyl-L-methionine. Cys-324 acts as the Nucleophile in catalysis. The active-site Proton acceptor is the Glu-358.

The protein belongs to the class I-like SAM-binding methyltransferase superfamily. RNA M5U methyltransferase family. TrmA subfamily.

The catalysed reaction is uridine(54) in tRNA + S-adenosyl-L-methionine = 5-methyluridine(54) in tRNA + S-adenosyl-L-homocysteine + H(+). It carries out the reaction uridine(341) in tmRNA + S-adenosyl-L-methionine = 5-methyluridine(341) in tmRNA + S-adenosyl-L-homocysteine + H(+). In terms of biological role, dual-specificity methyltransferase that catalyzes the formation of 5-methyluridine at position 54 (m5U54) in all tRNAs, and that of position 341 (m5U341) in tmRNA (transfer-mRNA). The chain is tRNA/tmRNA (uracil-C(5))-methyltransferase from Citrobacter koseri (strain ATCC BAA-895 / CDC 4225-83 / SGSC4696).